The primary structure comprises 178 residues: Translation initiation factor IF-3 (178 aa).

Belongs to the IF-3 family. As to quaternary structure, monomer.

The protein resides in the cytoplasm. Functionally, IF-3 binds to the 30S ribosomal subunit and shifts the equilibrium between 70S ribosomes and their 50S and 30S subunits in favor of the free subunits, thus enhancing the availability of 30S subunits on which protein synthesis initiation begins. This chain is Translation initiation factor IF-3, found in Macrococcus caseolyticus (strain JCSC5402) (Macrococcoides caseolyticum).